Consider the following 547-residue polypeptide: Putative nitric oxide synthase (547 aa).

The span at 24–40 (QLAPNPSSFSPTRAAST) shows a compositional bias: low complexity. Disordered regions lie at residues 24–57 (QLAPNPSSFSPTRAASTAPPPPEGAGPAAPSRGD) and 72–91 (VLAPEDAERRRRRREKRKAL). The segment covering 81 to 91 (RRRRREKRKAL) has biased composition (basic residues). The CP-type G domain maps to 167-343 (ADQLRDKLSY…LYDTPGVHLH (177 aa)).

Belongs to the TRAFAC class YlqF/YawG GTPase family. NOA1 subfamily.

The catalysed reaction is 2 L-arginine + 3 NADPH + 4 O2 + H(+) = 2 L-citrulline + 2 nitric oxide + 3 NADP(+) + 4 H2O. Functionally, produces nitric oxide (NO) which is a messenger molecule involved in hormonal signaling and defense responses in plant. In Oryza sativa subsp. japonica (Rice), this protein is Putative nitric oxide synthase.